The sequence spans 254 residues: Rho-related protein racD (254 aa).

15 to 22 (GDGAVGKT) contacts GTP. Residues 37 to 45 (YVPTVFDNF) carry the Effector region motif. GTP is bound by residues 62–66 (DTAGQ) and 120–123 (TKTD). Residues 186–231 (AVTSPTSKSSGKSSPSSTSSKPSKTTTTTTTSSSSSSPPAASTAKP) are compositionally biased toward low complexity. The disordered stretch occupies residues 186–254 (AVTSPTSKSS…KDKDEKKPAK (69 aa)). Positions 232–254 (AGEKKLSWGLFRKKDKDEKKPAK) are enriched in basic and acidic residues.

Belongs to the small GTPase superfamily. Rho family.

This Dictyostelium discoideum (Social amoeba) protein is Rho-related protein racD (racD).